Reading from the N-terminus, the 531-residue chain is RNA-binding protein RO60 (531 aa).

One can recognise a TROVE domain in the interval 24–360 (VRNNAGGFVY…AFGNVQPANT (337 aa)). Residues 128–274 (RTGTMLLHFL…TNGLTWLLRN (147 aa)) form an RNA-binding region. Positions 352–531 (FGNVQPANTR…VMTAFARGEV (180 aa)) are VWFA-like domain. Residues serine 369, serine 371, and threonine 438 each contribute to the a divalent metal cation site.

The protein belongs to the Ro 60 kDa family. As to quaternary structure, forms oligomers upon binding DrY RNA, The multimers are of an average size of 700 kDa and are composed of around 12 molecules of Rsr-DrY RNA.

The protein resides in the cytoplasm. In terms of biological role, binds to several small RNAs that accumulate during recovery from UV irradiation. Contributes to the resistance of D.radiodurans to ultraviolet irradiation. This chain is RNA-binding protein RO60, found in Deinococcus radiodurans (strain ATCC 13939 / DSM 20539 / JCM 16871 / CCUG 27074 / LMG 4051 / NBRC 15346 / NCIMB 9279 / VKM B-1422 / R1).